The following is a 939-amino-acid chain: Collagen-like protein 3 (939 aa).

Asn15, Asn35, Asn39, and Asn82 each carry an N-linked (GlcNAc...) asparagine; by host glycan. The segment covering 84-95 (SGSSGPSGPQGP) has biased composition (low complexity). Disordered regions lie at residues 84 to 332 (SGSS…DLGN) and 358 to 697 (SIKG…KGEA). Collagen-like domains lie at 88–147 (GPSG…NGDK), 148–207 (GNKG…KGDK), 211–330 (GNKG…SPDL), 364–423 (GDKG…SGAD), 427–486 (GDKG…KGEK), 493–552 (GESG…KGSK), 564–622 (GDKG…KGDV), and 638–697 (GDKG…KGEA). 13 stretches are compositionally biased toward basic and acidic residues: residues 96–110 (KGEKGSNGDKGDKGE), 123–182 (DADK…DPGI), 189–230 (DADK…DIGL), 237–260 (DADKGDKGDKGSKGDKGDKGDIGP), 267–288 (DADKGDKGDKGSKGDKGDKGTK), 297–314 (KGDKGDKGDKGIKGDKGE), 360–371 (KGDKGDKGDTGL), 378–416 (DADKGEKGDPGNKGDKGNKGDKGSKGDKGDKGDKGDTGL), 423–491 (DADK…DVGI), 498–527 (DADKGDKGEKGDKGVNGDKGDKGSKGDTGI), 537–552 (KGDKGSKGDKGDKGSK), 560–580 (KGDKGDKGDKGSKGDKGDIGI), and 589–684 (KGDK…DKGD). 5 N-linked (GlcNAc...) asparagine; by host glycosylation sites follow: Asn788, Asn820, Asn858, Asn919, and Asn925. Residues 896–923 (NGETGAPTTDSGTNYGAGGGGGGNGTQG) form a disordered region. Residues 910 to 923 (YGAGGGGGGNGTQG) are compositionally biased toward gly residues.

May be hydroxylated on lysine by the viral-encoded procollagen-lysine,2-oxoglutarate 5-dioxygenase.

It localises to the virion. Its function is as follows. May participate in the formation of a layer of cross-linked glycosylated fibrils at the viral surface thus giving it a hairy-like appearance. The polypeptide is Collagen-like protein 3 (Acanthamoeba polyphaga (Amoeba)).